Here is a 371-residue protein sequence, read N- to C-terminus: Macronuclear solute carrier homolog CR-MSC (371 aa).

Solcar repeat units follow at residues 16-111 (RMNY…FYDK), 120-208 (ARPD…CKEN), and 215-304 (PHWI…LSQF). 6 helical membrane-spanning segments follow: residues 22–42 (FAAANVIALITHAATQPLDMV), 89–109 (TFFFRTVGYTTARVTAFGYFY), 126–146 (VAAGVLGGFIAGVVTNPIDIV), 184–204 (AGANGFKLAAICSSMTNIYDW), 221–241 (LWGTAVAVAIGTVVSMPFDMI), and 281–301 (FGSFYAGGEAYFLRLFLICYL).

The protein belongs to the mitochondrial carrier (TC 2.A.29) family.

It is found in the membrane. The sequence is that of Macronuclear solute carrier homolog CR-MSC from Oxytricha trifallax (Sterkiella histriomuscorum).